Here is a 551-residue protein sequence, read N- to C-terminus: MDRRRFIKGSMAMAAVCGTSGIASLFSQAAFAADSDIADGQTQRFDFSILQSMAHDLAQTAWRGAPRPLPDTLATMTPQAYNSIQYDAEKSLWHNVENRQLDAQFFHMGMGFRRRVRMFSVDPATHLAREIHFRPELFKYNDAGVDTKQLEGQSDLGFAGFRVFKAPELARRDVVSFLGASYFRAVDDTYQYGLSARGLAIDTYTDSKEEFPDFTAFWFDTVKPGATTFTVYALLDSASITGAYKFTIHCEKSQVIMDVENHLYARKDIKQLGIAPMTSMFSCGTNERRMCDTIHPQIHDSDRLSMWRGNGEWICRPLNNPQKLQFNAYTDNNPKGFGLLQLDRDFSHYQDIMGWYNKRPSLWVEPRNKWGKGTIGLMEIPTTGETLDNIVCFWQPEKAVKAGDEFAFQYRLYWSAQPPVHCPLARVMATRTGMGGFSEGWAPGEHYPEKWARRFAVDFVGGDLKAAAPKGIEPVITLSSGEAKQIEILYIEPIDGYRIQFDWYPTSDSTDPVDMRMYLRCQGDAISETWLYQYFPPAPDKRQYVDDRVMS.

The tat-type signal signal peptide spans 1-32 (MDRRRFIKGSMAMAAVCGTSGIASLFSQAAFA).

It belongs to the OpgD/OpgG family. Predicted to be exported by the Tat system. The position of the signal peptide cleavage has not been experimentally proven.

Its subcellular location is the periplasm. It functions in the pathway glycan metabolism; osmoregulated periplasmic glucan (OPG) biosynthesis. Its function is as follows. Probably involved in the control of the structural glucose backbone of osmoregulated periplasmic glucans (OPGs). The sequence is that of Glucans biosynthesis protein D from Escherichia coli (strain K12 / MC4100 / BW2952).